The primary structure comprises 166 residues: Large ribosomal subunit protein uL10 (166 aa).

Belongs to the universal ribosomal protein uL10 family. Part of the ribosomal stalk of the 50S ribosomal subunit. The N-terminus interacts with L11 and the large rRNA to form the base of the stalk. The C-terminus forms an elongated spine to which L12 dimers bind in a sequential fashion forming a multimeric L10(L12)X complex.

Forms part of the ribosomal stalk, playing a central role in the interaction of the ribosome with GTP-bound translation factors. The protein is Large ribosomal subunit protein uL10 (rplJ) of Streptococcus pyogenes serotype M18 (strain MGAS8232).